Here is an 874-residue protein sequence, read N- to C-terminus: MLKKFDKKDEESGGGSNPFQHLEKSAVLQEARVFNETPINPRKCAHILTKILYLINQGEHLGTTEATEAFFAMTKLFQSNDPTLRRMCYLTIKEMSCIAEDVIIVTSSLTKDMTGKEDNYRGPAVRALCQITDSTMLQAIERYMKQAIVDKVPSVSSSALVSSLHLLKCSFDVVKRWVNEAQEAASSDNIMVQYHALGLLYHVRKNDRLAVNKMISKVTRHGLKSPFAYCMMIRVASKQLEEEDGSRDSPLFDFIESCLRNKHEMVVYEAASAIVNLPGCSAKELAPAVSVLQLFCSSPKAALRYAAVRTLNKVAMKHPSAVTACNLDLENLVTDSNRSIATLAITTLLKTGSESSIDRLMKQISSFMSEISDEFKVVVVQAISALCQKYPRKHAVLMNFLFTMLREEGGFEYKRAIVDCIISIIEENSESKETGLSHLCEFIEDCEFTVLATRILHLLGQEGPKTTNPSKYIRFIYNRVVLEHEEVRAGAVSALAKFGAQNEEMLPSILVLLKRCVMDDDNEVRDRATFYLNVLEQKQKALNAGYILNGLTVSIPGLERALQQYTLEPSEKPFDLKSVPLATAPMAEQRTESTPITAVKQPEKVAATRQEIFQEQLAAVPEFRGLGPLFKSSPEPVALTESETEYVIRCTKHTFTNHMVFQFDCTNTLNDQTLENVTVQMEPTEAYEVLCYVPARSLPYNQPGTCYTLVALPKEDPTAVACTFSCMMKFTVKDCDPTTGETDDEGYEDEYVLEDLEVTVADHIQKVMKLNFEAAWDEVGDEFEKEETFTLSTIKTLEEAVGNIVKFLGMHPCERSDKVPDNKNTHTLLLAGVFRGGHDILVRSRLLLLDTVTMQVTARSLEELPVDIILASVG.

The span at 1 to 11 (MLKKFDKKDEE) shows a compositional bias: basic and acidic residues. The segment at 1–21 (MLKKFDKKDEESGGGSNPFQH) is disordered. 4 HEAT repeats span residues 64–101 (TEAT…IAED), 283–320 (KELA…KHPS), 322–355 (VTAC…GSES), and 356–392 (SIDR…KYPR). Thr594 bears the Phosphothreonine mark. Positions 609-874 (RQEIFQEQLA…PVDIILASVG (266 aa)) are interaction with ZNF289/ARFGAP2.

Belongs to the COPG family. Oligomeric complex that consists of at least the alpha, beta, beta', gamma, delta, epsilon and zeta subunits. Interacts with ZNF289/ARFGAP2 through its C-terminal appendage domain. Interacts with EGFR upon EGF treatment; interaction is essential for regulation of EGF-dependent nuclear transport of EGFR by retrograde trafficking from the Golgi to the ER. The coatomer interacts with KDEL receptors; the interaction is important for retrograde trafficking of KDEL-bearing proteins from the Golgi to the endoplasmic reticulum. Interacts with COPB1. Interacts with TMED10 (via C-terminus). Interacts with TMED2, TMED3, TMED7 and TMED9.

It is found in the cytoplasm. The protein resides in the golgi apparatus membrane. The protein localises to the cytoplasmic vesicle. Its subcellular location is the COPI-coated vesicle membrane. The coatomer is a cytosolic protein complex that binds to dilysine motifs and reversibly associates with Golgi non-clathrin-coated vesicles, which further mediate biosynthetic protein transport from the ER, via the Golgi up to the trans Golgi network. Coatomer complex is required for budding from Golgi membranes, and is essential for the retrograde Golgi-to-ER transport of dilysine-tagged proteins. In mammals, the coatomer can only be recruited by membranes associated to ADP-ribosylation factors (ARFs), which are small GTP-binding proteins; the complex also influences the Golgi structural integrity, as well as the processing, activity, and endocytic recycling of LDL receptors. Required for limiting lipid storage in lipid droplets. Involved in lipid homeostasis by regulating the presence of perilipin family members PLIN2 and PLIN3 at the lipid droplet surface and promoting the association of adipocyte triglyceride lipase (PNPLA2) with the lipid droplet surface to mediate lipolysis. The protein is Coatomer subunit gamma-1 (COPG1) of Homo sapiens (Human).